The following is a 371-amino-acid chain: UDP-N-acetylglucosamine--N-acetylmuramyl-(pentapeptide) pyrophosphoryl-undecaprenol N-acetylglucosamine transferase (371 aa).

Residues 15–17 (TGG), N126, R172, S199, I256, 275–280 (ALTVSE), and Q301 each bind UDP-N-acetyl-alpha-D-glucosamine.

The protein belongs to the glycosyltransferase 28 family. MurG subfamily.

Its subcellular location is the cell inner membrane. It carries out the reaction di-trans,octa-cis-undecaprenyl diphospho-N-acetyl-alpha-D-muramoyl-L-alanyl-D-glutamyl-meso-2,6-diaminopimeloyl-D-alanyl-D-alanine + UDP-N-acetyl-alpha-D-glucosamine = di-trans,octa-cis-undecaprenyl diphospho-[N-acetyl-alpha-D-glucosaminyl-(1-&gt;4)]-N-acetyl-alpha-D-muramoyl-L-alanyl-D-glutamyl-meso-2,6-diaminopimeloyl-D-alanyl-D-alanine + UDP + H(+). Its pathway is cell wall biogenesis; peptidoglycan biosynthesis. Cell wall formation. Catalyzes the transfer of a GlcNAc subunit on undecaprenyl-pyrophosphoryl-MurNAc-pentapeptide (lipid intermediate I) to form undecaprenyl-pyrophosphoryl-MurNAc-(pentapeptide)GlcNAc (lipid intermediate II). The sequence is that of UDP-N-acetylglucosamine--N-acetylmuramyl-(pentapeptide) pyrophosphoryl-undecaprenol N-acetylglucosamine transferase from Francisella tularensis subsp. tularensis (strain FSC 198).